A 321-amino-acid polypeptide reads, in one-letter code: MAFLHNGNHTAVTEFILLGLTDDPVLRIVLFTIILCIYLVTVSGNLSTILLIRVSSQLHHPMYFFLSHLASADIGYSSSVTPNMLVNFLVKQNTISYIGCSIQFGSAAFFGGLECFLLAVMAYDRFVAICNPLLYSTKMSTQVCVQLVVGSYIGGFLNASFATVSFLFLFFCGPNIINHFFCDFAPLIELSCSDVRISVLVTSFSAGTVTMLTVLVIAISYTYILITILKMRSTEGRHKAFSTCTSHLTAVSLFYGTITFIYVMPKSRYSTDQNKVVSVFYMVVIPMLNPLIYSLRNNEIKGALRRHLGKKIFSQSNILFY.

The Extracellular segment spans residues 1–28 (MAFLHNGNHTAVTEFILLGLTDDPVLRI). N-linked (GlcNAc...) asparagine glycosylation is present at asparagine 8. Residues 29–49 (VLFTIILCIYLVTVSGNLSTI) traverse the membrane as a helical segment. The Cytoplasmic portion of the chain corresponds to 50–57 (LLIRVSSQ). The helical transmembrane segment at 58-78 (LHHPMYFFLSHLASADIGYSS) threads the bilayer. The Extracellular segment spans residues 79 to 102 (SVTPNMLVNFLVKQNTISYIGCSI). A disulfide bridge links cysteine 100 with cysteine 192. A helical transmembrane segment spans residues 103–123 (QFGSAAFFGGLECFLLAVMAY). The Cytoplasmic segment spans residues 124-136 (DRFVAICNPLLYS). A helical membrane pass occupies residues 137–157 (TKMSTQVCVQLVVGSYIGGFL). The Extracellular portion of the chain corresponds to 158–199 (NASFATVSFLFLFFCGPNIINHFFCDFAPLIELSCSDVRISV). Residues 200 to 220 (LVTSFSAGTVTMLTVLVIAIS) traverse the membrane as a helical segment. Residues 221–240 (YTYILITILKMRSTEGRHKA) lie on the Cytoplasmic side of the membrane. A helical transmembrane segment spans residues 241–261 (FSTCTSHLTAVSLFYGTITFI). Topologically, residues 262–274 (YVMPKSRYSTDQN) are extracellular. The chain crosses the membrane as a helical span at residues 275 to 295 (KVVSVFYMVVIPMLNPLIYSL). Topologically, residues 296–321 (RNNEIKGALRRHLGKKIFSQSNILFY) are cytoplasmic.

This sequence belongs to the G-protein coupled receptor 1 family.

The protein resides in the cell membrane. Functionally, potential odorant receptor. The polypeptide is Olfactory receptor 5P60 (Mus musculus (Mouse)).